A 40-amino-acid chain; its full sequence is Large ribosomal subunit protein bL36 (40 aa).

This sequence belongs to the bacterial ribosomal protein bL36 family.

The sequence is that of Large ribosomal subunit protein bL36 from Coxiella burnetii (strain Dugway 5J108-111).